The primary structure comprises 287 residues: Steroidogenic acute regulatory protein, mitochondrial (287 aa).

A mitochondrion-targeting transit peptide spans 1 to 61; sequence MLPATFKLCA…RRSSLLSSRI (61 aa). The START domain occupies 66–279; sequence GYNEAEVSYV…LRQRMADNSV (214 aa).

May interact with TSPO.

Its subcellular location is the mitochondrion. The enzyme catalyses cholesterol(in) = cholesterol(out). Its pathway is steroid metabolism; cholesterol metabolism. In terms of biological role, plays a key role in steroid hormone synthesis by enhancing the metabolism of cholesterol into pregnenolone. Mediates the transfer of cholesterol from the outer mitochondrial membrane to the inner mitochondrial membrane where it is cleaved to pregnenolone. The polypeptide is Steroidogenic acute regulatory protein, mitochondrial (star) (Salvelinus fontinalis (Brook trout)).